A 118-amino-acid polypeptide reads, in one-letter code: UPF0295 protein BCG9842_B4782 (118 aa).

Transmembrane regions (helical) follow at residues 12–32 (IRTF…LGVF) and 43–63 (FMMV…WIGM).

This sequence belongs to the UPF0295 family.

The protein localises to the cell membrane. This is UPF0295 protein BCG9842_B4782 from Bacillus cereus (strain G9842).